We begin with the raw amino-acid sequence, 697 residues long: Phosphate acetyltransferase (697 aa).

Residues 374-697 (LFLYNLVQAA…TVVITALQVK (324 aa)) form a phosphate acetyltransferase region.

In the N-terminal section; belongs to the CobB/CobQ family. This sequence in the C-terminal section; belongs to the phosphate acetyltransferase and butyryltransferase family.

It is found in the cytoplasm. The catalysed reaction is acetyl-CoA + phosphate = acetyl phosphate + CoA. It functions in the pathway metabolic intermediate biosynthesis; acetyl-CoA biosynthesis; acetyl-CoA from acetate: step 2/2. Involved in acetate metabolism. The sequence is that of Phosphate acetyltransferase (pta) from Synechocystis sp. (strain ATCC 27184 / PCC 6803 / Kazusa).